Consider the following 396-residue polypeptide: 1-deoxy-D-xylulose 5-phosphate reductoisomerase (396 aa).

Residues T13, G14, S15, I16, and N127 each coordinate NADPH. K128 serves as a coordination point for 1-deoxy-D-xylulose 5-phosphate. E129 serves as a coordination point for NADPH. Position 153 (D153) interacts with Mn(2+). The 1-deoxy-D-xylulose 5-phosphate site is built by S154, E155, S184, and H207. Mn(2+) is bound at residue E155. G213 is a binding site for NADPH. 1-deoxy-D-xylulose 5-phosphate-binding residues include S220, N225, K226, and E229. E229 lines the Mn(2+) pocket.

This sequence belongs to the DXR family. Mg(2+) is required as a cofactor. Mn(2+) serves as cofactor.

It catalyses the reaction 2-C-methyl-D-erythritol 4-phosphate + NADP(+) = 1-deoxy-D-xylulose 5-phosphate + NADPH + H(+). It participates in isoprenoid biosynthesis; isopentenyl diphosphate biosynthesis via DXP pathway; isopentenyl diphosphate from 1-deoxy-D-xylulose 5-phosphate: step 1/6. Its function is as follows. Catalyzes the NADPH-dependent rearrangement and reduction of 1-deoxy-D-xylulose-5-phosphate (DXP) to 2-C-methyl-D-erythritol 4-phosphate (MEP). This chain is 1-deoxy-D-xylulose 5-phosphate reductoisomerase, found in Pseudomonas fluorescens (strain Pf0-1).